The chain runs to 103 residues: Small ribosomal subunit protein uS10 (103 aa).

It belongs to the universal ribosomal protein uS10 family. As to quaternary structure, part of the 30S ribosomal subunit.

Functionally, involved in the binding of tRNA to the ribosomes. The sequence is that of Small ribosomal subunit protein uS10 from Novosphingobium aromaticivorans (strain ATCC 700278 / DSM 12444 / CCUG 56034 / CIP 105152 / NBRC 16084 / F199).